Reading from the N-terminus, the 382-residue chain is Chaperone protein DnaJ (382 aa).

In terms of domain architecture, J spans 5–70 (DYYDLLGLSK…DKRAAYDRYG (66 aa)). A CR-type zinc finger spans residues 138 to 216 (GTKVPINYVT…CSGSGRVRDE (79 aa)). 8 residues coordinate Zn(2+): cysteine 151, cysteine 154, cysteine 168, cysteine 171, cysteine 190, cysteine 193, cysteine 204, and cysteine 207. CXXCXGXG motif repeat units lie at residues 151-158 (CSSCSGSG), 168-175 (CNTCHGAG), 190-197 (CHVCNGEG), and 204-211 (CKKCSGSG).

It belongs to the DnaJ family. In terms of assembly, homodimer. Zn(2+) is required as a cofactor.

Its subcellular location is the cytoplasm. In terms of biological role, participates actively in the response to hyperosmotic and heat shock by preventing the aggregation of stress-denatured proteins and by disaggregating proteins, also in an autonomous, DnaK-independent fashion. Unfolded proteins bind initially to DnaJ; upon interaction with the DnaJ-bound protein, DnaK hydrolyzes its bound ATP, resulting in the formation of a stable complex. GrpE releases ADP from DnaK; ATP binding to DnaK triggers the release of the substrate protein, thus completing the reaction cycle. Several rounds of ATP-dependent interactions between DnaJ, DnaK and GrpE are required for fully efficient folding. Also involved, together with DnaK and GrpE, in the DNA replication of plasmids through activation of initiation proteins. This chain is Chaperone protein DnaJ, found in Ehrlichia ruminantium (strain Gardel).